The primary structure comprises 263 residues: Hydroxyethylthiazole kinase 2 (263 aa).

Residue Met-42 coordinates substrate. ATP-binding residues include Lys-118 and Thr-164. Position 191 (Gly-191) interacts with substrate.

It belongs to the Thz kinase family. Requires Mg(2+) as cofactor.

It catalyses the reaction 5-(2-hydroxyethyl)-4-methylthiazole + ATP = 4-methyl-5-(2-phosphooxyethyl)-thiazole + ADP + H(+). The protein operates within cofactor biosynthesis; thiamine diphosphate biosynthesis; 4-methyl-5-(2-phosphoethyl)-thiazole from 5-(2-hydroxyethyl)-4-methylthiazole: step 1/1. In terms of biological role, catalyzes the phosphorylation of the hydroxyl group of 4-methyl-5-beta-hydroxyethylthiazole (THZ). This Clostridium botulinum (strain Loch Maree / Type A3) protein is Hydroxyethylthiazole kinase 2.